The sequence spans 375 residues: Citrate synthase (375 aa).

Catalysis depends on residues His-266 and Asp-317.

This sequence belongs to the citrate synthase family. As to quaternary structure, homohexamer.

It catalyses the reaction oxaloacetate + acetyl-CoA + H2O = citrate + CoA + H(+). It functions in the pathway carbohydrate metabolism; tricarboxylic acid cycle; isocitrate from oxaloacetate: step 1/2. Its activity is regulated as follows. Allosterically inhibited by NADH. In Mycolicibacterium smegmatis (Mycobacterium smegmatis), this protein is Citrate synthase (gltA).